The sequence spans 945 residues: MSNKKADSKPQAKYPVNLLDTPFPMRGDLPKREPQWVKEWEERGIYEKIRAASKGRPKFILHDGPPYANGDIHLGHAVNKILKDIVVKSRNMAGFDAPYVPGWDCHGMPIEIQIEKQFGKSLPAAEVMSKARAYATEQIEKQKVGFKRLGVLGDWANPYKTMNFVNEAEEIRALGKIIEKGYVYRGLKPVNWCFDCGSALAEAEVEYKDRTDPTIDVMFAFAEPEKTAQAFGLPALPRADGGIVIWTTTPWTIPANQALNLHPEIVYALVDTERGLLIIAEERVEACMADFKLTGRIVATAPGVKLANLRFHHPLASAHPGYKRTAPVYLGDYVTTDTGTGVVHSSPAYGIEDFVSCKSHGMTDSDIINPVMGDGRYIESLPLFGGLSIWDANPKVVEALRAAGSLLRSEKYTHSYMHCWRHKTPIIYRATSQWFAGMDVTPHAGGKTLRETALEGIDATAFYPSWGKQRLFSMIANRPDWTLSRQRQWGVPMAFFVHKETGELHPRTLELLEEVAKRVEQSGIEAWQSLDPRELIGDDANLYEKNRDTLDVWFDSGTTHWHVLRGSHKDQLQFPADLYLEGSDQHRGWFHSSLLTASMIDGRAPYKGLLTHGFTVDGEGRKMSKSLGNGIDPHEVANRLGAEIIRLWIASTDYSGELAISEEILKRVTEGYRRIRNTLRFLLANLSDFDFAQHAVPVDEWLEIDRYAVAFSAQLQTELLGHYEKYEFHPVVAKLQTYCSEDLGGFYLDVLKDRLYTSAADSRARRSAQTALYHLTQGLLRVLAPFLSFTAEEAWKVFQPASDTVFTETYYAYPEVAGAAALIEKWALLRDVRGNVTKALEEARTANRIGSSLQAEVAVHASGARYDALTSLGDDLKFVLITSAASVVKVDDEAHESVDVAASKYQKCERCWHYREDVGAHAEHPTLCGRCFSNLFENGEIRSAA.

Positions 66–76 (PYANGDIHLGH) match the 'HIGH' region motif. Residue Glu-581 coordinates L-isoleucyl-5'-AMP. The 'KMSKS' region signature appears at 622 to 626 (KMSKS). Position 625 (Lys-625) interacts with ATP. 4 residues coordinate Zn(2+): Cys-908, Cys-911, Cys-928, and Cys-931.

This sequence belongs to the class-I aminoacyl-tRNA synthetase family. IleS type 1 subfamily. Monomer. Zn(2+) is required as a cofactor.

The protein resides in the cytoplasm. It catalyses the reaction tRNA(Ile) + L-isoleucine + ATP = L-isoleucyl-tRNA(Ile) + AMP + diphosphate. Catalyzes the attachment of isoleucine to tRNA(Ile). As IleRS can inadvertently accommodate and process structurally similar amino acids such as valine, to avoid such errors it has two additional distinct tRNA(Ile)-dependent editing activities. One activity is designated as 'pretransfer' editing and involves the hydrolysis of activated Val-AMP. The other activity is designated 'posttransfer' editing and involves deacylation of mischarged Val-tRNA(Ile). This Burkholderia vietnamiensis (strain G4 / LMG 22486) (Burkholderia cepacia (strain R1808)) protein is Isoleucine--tRNA ligase.